We begin with the raw amino-acid sequence, 289 residues long: ATP phosphoribosyltransferase (289 aa).

This sequence belongs to the ATP phosphoribosyltransferase family. Long subfamily. The cofactor is Mg(2+).

It localises to the cytoplasm. It catalyses the reaction 1-(5-phospho-beta-D-ribosyl)-ATP + diphosphate = 5-phospho-alpha-D-ribose 1-diphosphate + ATP. The protein operates within amino-acid biosynthesis; L-histidine biosynthesis; L-histidine from 5-phospho-alpha-D-ribose 1-diphosphate: step 1/9. Its activity is regulated as follows. Feedback inhibited by histidine. In terms of biological role, catalyzes the condensation of ATP and 5-phosphoribose 1-diphosphate to form N'-(5'-phosphoribosyl)-ATP (PR-ATP). Has a crucial role in the pathway because the rate of histidine biosynthesis seems to be controlled primarily by regulation of HisG enzymatic activity. This Methanosarcina barkeri (strain Fusaro / DSM 804) protein is ATP phosphoribosyltransferase.